Reading from the N-terminus, the 165-residue chain is Large ribosomal subunit protein uL10 (165 aa).

The protein belongs to the universal ribosomal protein uL10 family. Part of the ribosomal stalk of the 50S ribosomal subunit. The N-terminus interacts with L11 and the large rRNA to form the base of the stalk. The C-terminus forms an elongated spine to which L12 dimers bind in a sequential fashion forming a multimeric L10(L12)X complex.

Functionally, forms part of the ribosomal stalk, playing a central role in the interaction of the ribosome with GTP-bound translation factors. The polypeptide is Large ribosomal subunit protein uL10 (Edwardsiella ictaluri (strain 93-146)).